The primary structure comprises 640 residues: Chaperone protein DnaK (640 aa).

A Phosphothreonine; by autocatalysis modification is found at Thr-196. 2 disordered regions span residues Gly-487 to Ile-526 and Ser-593 to Lys-640. Positions Thr-501 to Ile-526 are enriched in basic and acidic residues. The span at Leu-595–Asp-613 shows a compositional bias: polar residues. Positions Ala-630–Lys-640 are enriched in acidic residues.

Belongs to the heat shock protein 70 family.

In terms of biological role, acts as a chaperone. The polypeptide is Chaperone protein DnaK (Pelodictyon phaeoclathratiforme (strain DSM 5477 / BU-1)).